Here is a 215-residue protein sequence, read N- to C-terminus: LexA repressor (215 aa).

The H-T-H motif DNA-binding region spans 28–48; it reads RAEIAAELGFSSPNAAEEHLR. Residues S133 and K170 each act as for autocatalytic cleavage activity in the active site.

It belongs to the peptidase S24 family. In terms of assembly, homodimer.

It catalyses the reaction Hydrolysis of Ala-|-Gly bond in repressor LexA.. Represses a number of genes involved in the response to DNA damage (SOS response), including recA and lexA. In the presence of single-stranded DNA, RecA interacts with LexA causing an autocatalytic cleavage which disrupts the DNA-binding part of LexA, leading to derepression of the SOS regulon and eventually DNA repair. This is LexA repressor from Burkholderia ambifaria (strain MC40-6).